The chain runs to 314 residues: Homoserine kinase (314 aa).

An ATP-binding site is contributed by 96–106; it reads PIGSGLGSSAC.

This sequence belongs to the GHMP kinase family. Homoserine kinase subfamily.

The protein localises to the cytoplasm. The enzyme catalyses L-homoserine + ATP = O-phospho-L-homoserine + ADP + H(+). The protein operates within amino-acid biosynthesis; L-threonine biosynthesis; L-threonine from L-aspartate: step 4/5. Functionally, catalyzes the ATP-dependent phosphorylation of L-homoserine to L-homoserine phosphate. In Histophilus somni (strain 129Pt) (Haemophilus somnus), this protein is Homoserine kinase.